A 312-amino-acid polypeptide reads, in one-letter code: Formimidoylglutamase (312 aa).

Mn(2+)-binding residues include histidine 123, aspartate 152, histidine 154, aspartate 156, cysteine 243, and aspartate 245.

Belongs to the arginase family. Mn(2+) serves as cofactor.

It catalyses the reaction N-formimidoyl-L-glutamate + H2O = formamide + L-glutamate. It participates in amino-acid degradation; L-histidine degradation into L-glutamate; L-glutamate from N-formimidoyl-L-glutamate (hydrolase route): step 1/1. In terms of biological role, catalyzes the conversion of N-formimidoyl-L-glutamate to L-glutamate and formamide. This Pseudomonas fluorescens (strain ATCC BAA-477 / NRRL B-23932 / Pf-5) protein is Formimidoylglutamase.